We begin with the raw amino-acid sequence, 149 residues long: ATP synthase epsilon chain (149 aa).

Composition is skewed to basic and acidic residues over residues 99–116 (DVERAESAEERAKRRLEE) and 123–134 (RETHEAARDRAR). Positions 99–149 (DVERAESAEERAKRRLEEGVQEEERETHEAARDRARNRLRVAMGKVGTRQS) are disordered.

Belongs to the ATPase epsilon chain family. As to quaternary structure, F-type ATPases have 2 components, CF(1) - the catalytic core - and CF(0) - the membrane proton channel. CF(1) has five subunits: alpha(3), beta(3), gamma(1), delta(1), epsilon(1). CF(0) has three main subunits: a, b and c.

It is found in the cell inner membrane. Its function is as follows. Produces ATP from ADP in the presence of a proton gradient across the membrane. The polypeptide is ATP synthase epsilon chain (Salinibacter ruber (strain DSM 13855 / M31)).